The sequence spans 333 residues: Chlorophyllide reductase 35.5 kDa chain (333 aa).

Over residues 1–17 (MTDAPELKAFDQRLRDE) the composition is skewed to basic and acidic residues. The tract at residues 1–30 (MTDAPELKAFDQRLRDEAAEEPTLEVPQGE) is disordered. Residues 45 to 50 (GIGKSF) and Lys-74 each bind ATP. Ser-49 contacts Mg(2+). [4Fe-4S] cluster contacts are provided by Cys-130 and Cys-165. 219–220 (NK) lines the ATP pocket.

Belongs to the NifH/BchL/ChlL family. As to quaternary structure, homodimer. Chlorophyllide reductase is composed of three subunits; BchX, BchY and BchZ. The cofactor is [4Fe-4S] cluster.

The enzyme catalyses 3-deacetyl-3-vinylbacteriochlorophyllide a + 2 oxidized [2Fe-2S]-[ferredoxin] + ADP + phosphate = chlorophyllide a + 2 reduced [2Fe-2S]-[ferredoxin] + ATP + H2O + H(+). It carries out the reaction bacteriochlorophyllide a + 2 oxidized [2Fe-2S]-[ferredoxin] + ADP + phosphate = 3-acetyl-3-devinylchlorophyllide a + 2 reduced [2Fe-2S]-[ferredoxin] + ATP + H2O + H(+). The catalysed reaction is 3-deacetyl-3-(1-hydroxyethyl)bacteriochlorophyllide a + 2 oxidized [2Fe-2S]-[ferredoxin] + ADP + phosphate = 3-devinyl-3-(1-hydroxyethyl)chlorophyllide a + 2 reduced [2Fe-2S]-[ferredoxin] + ATP + H2O + H(+). Its pathway is porphyrin-containing compound metabolism; bacteriochlorophyll biosynthesis. Its function is as follows. Converts chlorophylls (Chl) into bacteriochlorophylls (BChl) by reducing ring B of the tetrapyrrole. The polypeptide is Chlorophyllide reductase 35.5 kDa chain (bchX) (Cereibacter sphaeroides (strain ATCC 17023 / DSM 158 / JCM 6121 / CCUG 31486 / LMG 2827 / NBRC 12203 / NCIMB 8253 / ATH 2.4.1.) (Rhodobacter sphaeroides)).